Reading from the N-terminus, the 534-residue chain is UDP-glucuronosyltransferase 1A5 (534 aa).

Positions 1–28 (MATGLQVPLPQLATGLLLLLSVQPWAES) are cleaved as a signal peptide. N119, N296, and N348 each carry an N-linked (GlcNAc...) asparagine glycan. Residues 492–508 (VIGFLLAVVLTVAFITF) form a helical membrane-spanning segment.

Belongs to the UDP-glycosyltransferase family. In terms of assembly, homodimer. Homooligomer. Interacts with UGT1A1, UGT1A3, UGT1A4, UGT1A6, UGT1A7, UGT1A8, UGT1A9 and UGT1A10 to form heterodimers. Isoform 1 interacts with isoform 2/i2 suggesting that oligomerization is involved in negative regulation of transferase activity by isoform 2. Isoform 1 also interacts with respective i2 isoforms of UGT1A1, UGT1A3, UGT1A4, UGT1A6, UGT1A7, UGT1A8, UGT1A9 and UGT1A10. Isoform 1 and isoform 2 are expressed in colon and small intestine. Neither isoform is expressed in liver, kidney or esophagus.

The protein localises to the endoplasmic reticulum membrane. The catalysed reaction is glucuronate acceptor + UDP-alpha-D-glucuronate = acceptor beta-D-glucuronoside + UDP + H(+). The enzyme catalyses zolasartan + UDP-alpha-D-glucuronate = zolarsartan-1-N-beta-D-glucuronide + UDP. Its function is as follows. UDP-glucuronosyltransferase (UGT) that catalyzes phase II biotransformation reactions in which lipophilic substrates are conjugated with glucuronic acid to increase the metabolite's water solubility, thereby facilitating excretion into either the urine or bile. Essential for the elimination and detoxification of drugs, xenobiotics and endogenous compounds. Involved in the glucuronidation of the AGTR1 angiotensin receptor antagonist zolarsatan, a drug which can inhibit the effect of angiotensin II. In terms of biological role, lacks UGT glucuronidation activity but acts as a negative regulator of isoform 1. The polypeptide is UDP-glucuronosyltransferase 1A5 (Homo sapiens (Human)).